Here is a 343-residue protein sequence, read N- to C-terminus: Anthranilate phosphoribosyltransferase (343 aa).

5-phospho-alpha-D-ribose 1-diphosphate is bound by residues Gly84, 87-88 (GD), Thr92, 94-97 (NIST), 112-120 (KHGNRGVSS), and Ser124. Gly84 serves as a coordination point for anthranilate. Ser96 contacts Mg(2+). Asn115 serves as a coordination point for anthranilate. Residue Arg170 participates in anthranilate binding. Residues Asp229 and Glu230 each contribute to the Mg(2+) site.

This sequence belongs to the anthranilate phosphoribosyltransferase family. Homodimer. The cofactor is Mg(2+).

It carries out the reaction N-(5-phospho-beta-D-ribosyl)anthranilate + diphosphate = 5-phospho-alpha-D-ribose 1-diphosphate + anthranilate. Its pathway is amino-acid biosynthesis; L-tryptophan biosynthesis; L-tryptophan from chorismate: step 2/5. Its function is as follows. Catalyzes the transfer of the phosphoribosyl group of 5-phosphorylribose-1-pyrophosphate (PRPP) to anthranilate to yield N-(5'-phosphoribosyl)-anthranilate (PRA). In Burkholderia vietnamiensis (strain G4 / LMG 22486) (Burkholderia cepacia (strain R1808)), this protein is Anthranilate phosphoribosyltransferase.